The chain runs to 105 residues: UPF0145 protein Mevan_1624 (105 aa).

It belongs to the UPF0145 family.

This chain is UPF0145 protein Mevan_1624, found in Methanococcus vannielii (strain ATCC 35089 / DSM 1224 / JCM 13029 / OCM 148 / SB).